The following is a 565-amino-acid chain: MTENNQDLKQNWTRHREGVVRAARGTQLTAKTWMTEAPLRMLMNNLDPEVAENPNELVVYGGIGRAARNWECYDKIVESLTRLNDDETLLVQSGKPVGVFKTHSNAPRVLIANSNLVPHWASWEHFNELDAKGLAMYGQMTAGSWIYIGSQGIVQGTYETFVEAGRQHYDGNLKGRWVLTAGLGGMGGAQPLAATLAGACSLNIECQQSRIDFRIKTRYVDEQAADLDDALARIAKYTAEGKAISIALCGNAADILPEMVRRGVRPDMVTDQTSAHDPLNGYLPKGWTWDEYRARSVSEPAEVVKAAKQSMAEHVEAMLAFQQAGIPTFDYGNNIRQMAKEVGVSNAFDFPGFVPAYIRPLFCRGIGPFRWAALSGDPQDIYKTDAKVKELIPDDDHLHNWLDMARERISFQGLPARICWVGLGQRAKLGLAFNEMVRSGELSAPVVIGRDHLDSGSVASPNRETESMRDGSDAVSDWPLLNALLNTASGATWVSLHHGGGVGMGFSQHSGMVIVCDGTDEAAERIARVLHNDPATGVMRHADAGYDIAIDCAKEQGLNLPMIGR.

Residues 61 to 62 (GG), Gln139, 185 to 187 (GMG), Glu205, Arg210, 251 to 252 (NA), 272 to 276 (QTSAH), 282 to 283 (YL), and Tyr331 contribute to the NAD(+) site. Cys419 is a catalytic residue. Residues 453–472 (LDSGSVASPNRETESMRDGS) are disordered. Residues 463 to 472 (RETESMRDGS) show a composition bias toward basic and acidic residues. Residue Gly501 participates in NAD(+) binding.

Belongs to the urocanase family. NAD(+) is required as a cofactor.

The protein localises to the cytoplasm. It carries out the reaction 4-imidazolone-5-propanoate = trans-urocanate + H2O. Its pathway is amino-acid degradation; L-histidine degradation into L-glutamate; N-formimidoyl-L-glutamate from L-histidine: step 2/3. Its function is as follows. Catalyzes the conversion of urocanate to 4-imidazolone-5-propionate. The chain is Urocanate hydratase from Pseudomonas syringae pv. tomato (strain ATCC BAA-871 / DC3000).